A 526-amino-acid polypeptide reads, in one-letter code: Threonine synthase 1, chloroplastic (526 aa).

Residues 1-40 (MASSCLFNASVSSLNPKQDPIRRHRSTSLLRHRPVVISCT) constitute a chloroplast transit peptide. Residues 142–144 (PYG), 165–167 (SAF), asparagine 172, leucine 173, lysine 181, and asparagine 187 contribute to the S-adenosyl-L-methionine site. The residue at position 203 (lysine 203) is an N6-(pyridoxal phosphate)lysine. Pyridoxal 5'-phosphate-binding positions include 335-339 (GNLGN) and threonine 472.

The protein belongs to the threonine synthase family. Homodimer. The cofactor is pyridoxal 5'-phosphate.

The protein localises to the plastid. It is found in the chloroplast. The catalysed reaction is O-phospho-L-homoserine + H2O = L-threonine + phosphate. It participates in amino-acid biosynthesis; L-threonine biosynthesis; L-threonine from L-aspartate: step 5/5. Its activity is regulated as follows. Allosterically activated by S-adenosyl-L-methionine (SAM). Activated by S-adenosyl-L-ethionine, 5'-amino-5'-deoxyadenosine, sinefungin and 5'-deoxy-5-methylthioadenosine. Inhibited by AMP. Its function is as follows. Catalyzes the gamma-elimination of phosphate from L-phosphohomoserine and the beta-addition of water to produce L-threonine. The chain is Threonine synthase 1, chloroplastic (TS1) from Arabidopsis thaliana (Mouse-ear cress).